The chain runs to 83 residues: uncharacterized protein (83 aa).

The protein belongs to the chlamydial CPn_0710/CT_666/TC_0037 family.

This is an uncharacterized protein from Chlamydia trachomatis serovar D (strain ATCC VR-885 / DSM 19411 / UW-3/Cx).